The sequence spans 288 residues: Phytanoyl-CoA dioxygenase domain-containing protein 1 homolog (288 aa).

2-oxoglutarate is bound by residues Lys-95, Met-134, 149 to 151 (HVD), and Trp-167. The Fe cation site is built by His-149 and Asp-151. His-242 is a Fe cation binding site. The 2-oxoglutarate site is built by Ser-244 and Arg-253.

This sequence belongs to the PhyH family. PHYHD1 subfamily. Requires Fe cation as cofactor.

Has alpha-ketoglutarate-dependent dioxygenase activity. Does not show detectable activity towards fatty acid CoA thioesters. Is not expected to be active with phytanoyl CoA. In Caenorhabditis briggsae, this protein is Phytanoyl-CoA dioxygenase domain-containing protein 1 homolog.